We begin with the raw amino-acid sequence, 257 residues long: Imidazole glycerol phosphate synthase subunit HisF (257 aa).

Catalysis depends on residues Asp11 and Asp130.

This sequence belongs to the HisA/HisF family. Heterodimer of HisH and HisF.

It localises to the cytoplasm. The catalysed reaction is 5-[(5-phospho-1-deoxy-D-ribulos-1-ylimino)methylamino]-1-(5-phospho-beta-D-ribosyl)imidazole-4-carboxamide + L-glutamine = D-erythro-1-(imidazol-4-yl)glycerol 3-phosphate + 5-amino-1-(5-phospho-beta-D-ribosyl)imidazole-4-carboxamide + L-glutamate + H(+). It functions in the pathway amino-acid biosynthesis; L-histidine biosynthesis; L-histidine from 5-phospho-alpha-D-ribose 1-diphosphate: step 5/9. Functionally, IGPS catalyzes the conversion of PRFAR and glutamine to IGP, AICAR and glutamate. The HisF subunit catalyzes the cyclization activity that produces IGP and AICAR from PRFAR using the ammonia provided by the HisH subunit. The polypeptide is Imidazole glycerol phosphate synthase subunit HisF (Photobacterium profundum (strain SS9)).